A 231-amino-acid polypeptide reads, in one-letter code: LexA repressor (231 aa).

Positions 26-46 (FDEMKDALDLRSKSGIHRLIT) form a DNA-binding region, H-T-H motif. Active-site for autocatalytic cleavage activity residues include serine 152 and lysine 190.

This sequence belongs to the peptidase S24 family. In terms of assembly, homodimer.

It catalyses the reaction Hydrolysis of Ala-|-Gly bond in repressor LexA.. Represses a number of genes involved in the response to DNA damage (SOS response), including recA and lexA. In the presence of single-stranded DNA, RecA interacts with LexA causing an autocatalytic cleavage which disrupts the DNA-binding part of LexA, leading to derepression of the SOS regulon and eventually DNA repair. The chain is LexA repressor from Dinoroseobacter shibae (strain DSM 16493 / NCIMB 14021 / DFL 12).